The sequence spans 521 residues: Serine/threonine-protein kinase A (521 aa).

Positions 15 to 289 constitute a Protein kinase domain; sequence YQLVELVGSG…DVIIRAIDAI (275 aa). ATP-binding positions include 21 to 29 and K45; that span reads VGSGAMGQV. The Proton acceptor role is filled by D148.

The protein belongs to the protein kinase superfamily. Ser/Thr protein kinase family. In terms of processing, autophosphorylated.

It carries out the reaction L-seryl-[protein] + ATP = O-phospho-L-seryl-[protein] + ADP + H(+). The catalysed reaction is L-threonyl-[protein] + ATP = O-phospho-L-threonyl-[protein] + ADP + H(+). Protein kinase that regulates cellular motility via phosphorylation of membrane proteins. The protein is Serine/threonine-protein kinase A (spkA) of Synechocystis sp. (strain ATCC 27184 / PCC 6803 / Kazusa).